The sequence spans 84 residues: Exodeoxyribonuclease 7 small subunit (84 aa).

Belongs to the XseB family. In terms of assembly, heterooligomer composed of large and small subunits.

It localises to the cytoplasm. The catalysed reaction is Exonucleolytic cleavage in either 5'- to 3'- or 3'- to 5'-direction to yield nucleoside 5'-phosphates.. In terms of biological role, bidirectionally degrades single-stranded DNA into large acid-insoluble oligonucleotides, which are then degraded further into small acid-soluble oligonucleotides. This Bacillus velezensis (strain DSM 23117 / BGSC 10A6 / LMG 26770 / FZB42) (Bacillus amyloliquefaciens subsp. plantarum) protein is Exodeoxyribonuclease 7 small subunit.